The primary structure comprises 181 residues: Peptidyl-tRNA hydrolase (181 aa).

Tyr-14 is a binding site for tRNA. His-19 serves as the catalytic Proton acceptor. TRNA contacts are provided by Phe-60, Asn-62, and Asn-106.

Belongs to the PTH family. In terms of assembly, monomer.

Its subcellular location is the cytoplasm. It catalyses the reaction an N-acyl-L-alpha-aminoacyl-tRNA + H2O = an N-acyl-L-amino acid + a tRNA + H(+). Hydrolyzes ribosome-free peptidyl-tRNAs (with 1 or more amino acids incorporated), which drop off the ribosome during protein synthesis, or as a result of ribosome stalling. Functionally, catalyzes the release of premature peptidyl moieties from peptidyl-tRNA molecules trapped in stalled 50S ribosomal subunits, and thus maintains levels of free tRNAs and 50S ribosomes. The protein is Peptidyl-tRNA hydrolase of Campylobacter curvus (strain 525.92).